The primary structure comprises 516 residues: Glutamyl-tRNA(Gln) amidotransferase subunit B, mitochondrial (516 aa).

The protein belongs to the GatB/GatE family. GatB subfamily. Subunit of the heterotrimeric GatCAB amidotransferase (AdT) complex, composed of A, B and C subunits.

It is found in the mitochondrion. It catalyses the reaction L-glutamyl-tRNA(Gln) + L-glutamine + ATP + H2O = L-glutaminyl-tRNA(Gln) + L-glutamate + ADP + phosphate + H(+). In terms of biological role, allows the formation of correctly charged Gln-tRNA(Gln) through the transamidation of misacylated Glu-tRNA(Gln) in the mitochondria. The reaction takes place in the presence of glutamine and ATP through an activated gamma-phospho-Glu-tRNA(Gln). The chain is Glutamyl-tRNA(Gln) amidotransferase subunit B, mitochondrial from Drosophila melanogaster (Fruit fly).